Consider the following 1226-residue polypeptide: MGSNIRAQIEAQLKQRILLIDGGMGTMIQGYKLQEQDYRGERFADWHSDLKGNNDLLVLTQPQLIKEIHHAYLEAGADILETNTFNATTIAMADYDMESLSEEINFAAAKLAREAADEWTAKNPAKPRYVAGVLGPTNRTCSISPDVNDPGYRNVSFDELVEAYSESTRALIRGGSDLILIETIFDTLNAKACAFAVESVFEELGFALPVMISGTITDASGRTLSGQTTEAFYNSLRHVRPISFGLNCALGPDELRPYVEELSRISETFVSTHPNAGLPNAFGEYDLSPEEMAEHVKEWAQSGFLNLIGGCCGTTPEHIRHMAMAVEGESPRVLPEIPVACRLSGLEPLTIAKDTLFVNVGERTNVTGSARFKRLIKEELYDEALDVAREQVENGAQIIDINMDEGMLDAEACMVRFLNLCASEPEISKVPIMVDSSKWEVIEAGLKCIQGKGIVNSISLKEGKEKFVEQAKLIRRYGAAVIVMAFDEVGQADTRERKLEICTKAYRILVDEVGFPPEDVIFDPNIFAVATGIDEHNNYAVDFIEAVADIKRDLPHAMISGGVSNVSFSFRGNNYVREAIHAVFLYHCFKNGMDMGIVNAGQLEIYDNVPEKLREAVEDVVLNRRDDATERLLEIAEEYRENAVGKQEDASALEWRTWSVEKRLEHALVKGITEFIVEDTEEARLNASKPLEVIEGPLMDGMNVVGDLFGEGKMFLPQVVKSARVMKQAVAHLEPFINASKQVGSSNGKILLATVKGDVHDIGKNIVGVVLQCNNYEIIDLGVMVPCEQILKVAKEQQVDIIGLSGLITPSLDEMVHVAKEMERLGFDLPLLIGGATTSKAHTAVKIEQNYSHPVVYVNNASRAVGVCTSLLSDELRPAFVERLQADYELVRDQHNRKKPRTKPVTLEAARANKVAIDWQSYTPPAPSQPGVHVFDDFDVATLRQYIDWTPFFLTWSLVGKYPTIFEHEEVGEEAKRLFEDANEWLDRIEQEGLLKARGMCGLFPAASVGDDIEVYTDESRTQVAKVLHNLRQQTEKPKGANYCLSDYVAPKESGKKDWIGAFAVTGGVNERELADQFKAQGDDYNAIMIQAVADRLAEAFAEYLHERVRKEIWGYAADENLSNEELIREKYQGIRPAPGYPACPEHTEKGPLWELLNVEETIGMSLTSSYAMWPGASVSGWYFSHPDSRYFAIAQIQQDQVESYAKRKGWDLLEAEKWLGPNING.

Residues 6 to 326 form the Hcy-binding domain; it reads RAQIEAQLKQ…EHIRHMAMAV (321 aa). Positions 248, 311, and 312 each coordinate Zn(2+). Positions 357–618 constitute a Pterin-binding domain; the sequence is FVNVGERTNV…VPEKLREAVE (262 aa). The B12-binding N-terminal domain occupies 651–745; it reads SALEWRTWSV…FINASKQVGS (95 aa). Methylcob(III)alamin-binding positions include Glu-695, 757-761, His-760, Ser-805, Thr-809, and Ala-861; that span reads GDVHD. The region spanning 747–882 is the B12-binding domain; sequence NGKILLATVK…SDELRPAFVE (136 aa). Residues 898–1226 form the AdoMet activation domain; sequence KKPRTKPVTL…EKWLGPNING (329 aa). S-adenosyl-L-methionine is bound by residues Asp-948, Arg-1136, and 1191 to 1192; that span reads YF.

The protein belongs to the vitamin-B12 dependent methionine synthase family. Requires methylcob(III)alamin as cofactor. The cofactor is Zn(2+).

It catalyses the reaction (6S)-5-methyl-5,6,7,8-tetrahydrofolate + L-homocysteine = (6S)-5,6,7,8-tetrahydrofolate + L-methionine. The protein operates within amino-acid biosynthesis; L-methionine biosynthesis via de novo pathway; L-methionine from L-homocysteine (MetH route): step 1/1. Its function is as follows. Catalyzes the transfer of a methyl group from methyl-cobalamin to homocysteine, yielding enzyme-bound cob(I)alamin and methionine. Subsequently, remethylates the cofactor using methyltetrahydrofolate. This chain is Methionine synthase (metH), found in Vibrio vulnificus (strain YJ016).